We begin with the raw amino-acid sequence, 431 residues long: uncharacterized protein (431 aa).

A run of 12 helical transmembrane segments spans residues 33 to 53 (VARV…VIYL), 63 to 83 (FSVF…ANGL), 111 to 131 (VSGM…PLWS), 143 to 163 (VALL…LGML), 175 to 195 (LMVA…VIGW), 197 to 217 (LVGF…MLMT), 241 to 261 (AHSI…PVLL), 273 to 293 (GVVI…LTAM), 318 to 338 (LIGG…PWIM), 358 to 378 (AAAV…AAAL), 381 to 401 (AYSL…LLPL), and 407 to 427 (TVVA…VALA).

To M.tuberculosis Rv1510 and M.bovis Mb3654.

The protein localises to the cell membrane. This is an uncharacterized protein from Mycobacterium tuberculosis (strain ATCC 25618 / H37Rv).